Consider the following 171-residue polypeptide: S-ribosylhomocysteine lyase (171 aa).

Positions 54, 58, and 128 each coordinate Fe cation.

Belongs to the LuxS family. Homodimer. Requires Fe cation as cofactor.

It catalyses the reaction S-(5-deoxy-D-ribos-5-yl)-L-homocysteine = (S)-4,5-dihydroxypentane-2,3-dione + L-homocysteine. In terms of biological role, involved in the synthesis of autoinducer 2 (AI-2) which is secreted by bacteria and is used to communicate both the cell density and the metabolic potential of the environment. The regulation of gene expression in response to changes in cell density is called quorum sensing. Catalyzes the transformation of S-ribosylhomocysteine (RHC) to homocysteine (HC) and 4,5-dihydroxy-2,3-pentadione (DPD). The sequence is that of S-ribosylhomocysteine lyase from Escherichia fergusonii (strain ATCC 35469 / DSM 13698 / CCUG 18766 / IAM 14443 / JCM 21226 / LMG 7866 / NBRC 102419 / NCTC 12128 / CDC 0568-73).